Consider the following 375-residue polypeptide: Tyrosine--tRNA ligase (375 aa).

Residues Y37, Y168, Q172, D175, and Q190 each contribute to the L-tyrosine site. Residues 251–255 (KMSKS) carry the 'KMSKS' region motif. ATP is bound at residue K254.

Belongs to the class-I aminoacyl-tRNA synthetase family. TyrS type 4 subfamily. Homodimer.

The protein resides in the cytoplasm. The catalysed reaction is tRNA(Tyr) + L-tyrosine + ATP = L-tyrosyl-tRNA(Tyr) + AMP + diphosphate + H(+). In terms of biological role, catalyzes the attachment of tyrosine to tRNA(Tyr) in a two-step reaction: tyrosine is first activated by ATP to form Tyr-AMP and then transferred to the acceptor end of tRNA(Tyr). This chain is Tyrosine--tRNA ligase, found in Pyrococcus furiosus (strain ATCC 43587 / DSM 3638 / JCM 8422 / Vc1).